Here is a 291-residue protein sequence, read N- to C-terminus: ATP synthase gamma chain (291 aa).

Belongs to the ATPase gamma chain family. In terms of assembly, F-type ATPases have 2 components, CF(1) - the catalytic core - and CF(0) - the membrane proton channel. CF(1) has five subunits: alpha(3), beta(3), gamma(1), delta(1), epsilon(1). CF(0) has three main subunits: a, b and c.

It is found in the cell inner membrane. Produces ATP from ADP in the presence of a proton gradient across the membrane. The gamma chain is believed to be important in regulating ATPase activity and the flow of protons through the CF(0) complex. The protein is ATP synthase gamma chain of Pelagibacter ubique (strain HTCC1062).